The sequence spans 818 residues: Piwi-like protein (818 aa).

The PAZ domain occupies 220–339; it reads RINRVLNDNS…ITGELCFLCG (120 aa). Positions 501–800 constitute a Piwi domain; sequence KIALVFVPDD…LAELIGKVHK (300 aa).

Belongs to the argonaute family. Piwi subfamily.

The protein is Piwi-like protein (iwi) of Dugesia japonica (Planarian).